Reading from the N-terminus, the 137-residue chain is Interferon-induced transmembrane protein 3 (137 aa).

Topologically, residues Met1–His57 are cytoplasmic. Tyr20 carries the post-translational modification Phosphotyrosine. Residue Lys24 forms a Glycyl lysine isopeptide (Lys-Gly) (interchain with G-Cter in ubiquitin) linkage. Tyr27 carries the post-translational modification Phosphotyrosine. Residues Val58–Tyr78 constitute an intramembrane region (helical). The segment at Trp60–Val93 is interaction with SPP1. 2 S-palmitoyl cysteine lipidation sites follow: Cys71 and Cys72. At Ala79–Ser109 the chain is on the cytoplasmic side. Glycyl lysine isopeptide (Lys-Gly) (interchain with G-Cter in ubiquitin) cross-links involve residues Lys83, Lys88, and Lys104. Cys105 carries the S-palmitoyl cysteine lipid modification. The interval Ile108 to Gln133 is interaction with VAPA. Residues Thr110 to Leu130 traverse the membrane as a helical segment. The Extracellular portion of the chain corresponds to Asn131 to Thr137.

Belongs to the CD225/Dispanin family. As to quaternary structure, interacts with ATP6V0B. Interacts with CD81. Interacts with SPP1; the interaction reduces OPN expression. Interacts with BRI3. Post-translationally, polyubiquitinated with both 'Lys-48' and 'Lys-63' linkages. Ubiquitination negatively regulates antiviral activity. Lys-24 is the most prevalent ubiquitination site. In terms of processing, phosphorylation at Tyr-20 is required for endosomal and lysosomal location. In terms of tissue distribution, expressed in acinar cell. Predominantly expressed in nascent primordial germ cells, as well as in gonadal germ cells.

It localises to the cell membrane. Its subcellular location is the late endosome membrane. The protein localises to the early endosome membrane. The protein resides in the lysosome membrane. It is found in the cytoplasm. It localises to the perinuclear region. IFN-induced antiviral protein which disrupts intracellular cholesterol homeostasis. Inhibits the entry of viruses to the host cell cytoplasm by preventing viral fusion with cholesterol depleted endosomes. May inactivate new enveloped viruses which buds out of the infected cell, by letting them go out with a cholesterol depleted membrane. Active against multiple viruses, including influenza A virus, SARS coronaviruses (SARS-CoV and SARS-CoV-2), Marburg virus (MARV), Ebola virus (EBOV), Dengue virus (DNV), West Nile virus (WNV), human immunodeficiency virus type 1 (HIV-1), hepatitis C virus (HCV) and vesicular stomatitis virus (VSV). Can inhibit: influenza virus hemagglutinin protein-mediated viral entry, MARV and EBOV GP1,2-mediated viral entry, SARS-CoV and SARS-CoV-2 S protein-mediated viral entry and VSV G protein-mediated viral entry. Plays a critical role in the structural stability and function of vacuolar ATPase (v-ATPase). Establishes physical contact with the v-ATPase of endosomes which is critical for proper clathrin localization and is also required for the function of the v-ATPase to lower the pH in phagocytic endosomes thus establishing an antiviral state. In hepatocytes, IFITM proteins act in a coordinated manner to restrict HCV infection by targeting the endocytosed HCV virion for lysosomal degradation. IFITM2 and IFITM3 display anti-HCV activity that may complement the anti-HCV activity of IFITM1 by inhibiting the late stages of HCV entry, possibly in a coordinated manner by trapping the virion in the endosomal pathway and targeting it for degradation at the lysosome. Exerts opposing activities on SARS-CoV-2, including amphipathicity-dependent restriction of virus at endosomes and amphipathicity-independent enhancement of infection at the plasma membrane. The protein is Interferon-induced transmembrane protein 3 of Mus musculus (Mouse).